The primary structure comprises 218 residues: 3,4-dihydroxy-2-butanone 4-phosphate synthase (218 aa).

Residues 38–39, aspartate 43, 151–155, and glutamate 175 each bind D-ribulose 5-phosphate; these read RE and RRGHT. Glutamate 39 provides a ligand contact to Mg(2+). Mg(2+) is bound at residue histidine 154.

This sequence belongs to the DHBP synthase family. Homodimer. Requires Mg(2+) as cofactor. Mn(2+) serves as cofactor.

It carries out the reaction D-ribulose 5-phosphate = (2S)-2-hydroxy-3-oxobutyl phosphate + formate + H(+). It functions in the pathway cofactor biosynthesis; riboflavin biosynthesis; 2-hydroxy-3-oxobutyl phosphate from D-ribulose 5-phosphate: step 1/1. In terms of biological role, catalyzes the conversion of D-ribulose 5-phosphate to formate and 3,4-dihydroxy-2-butanone 4-phosphate. This chain is 3,4-dihydroxy-2-butanone 4-phosphate synthase, found in Vibrio vulnificus (strain CMCP6).